The sequence spans 2602 residues: Filamin-B (2602 aa).

The actin-binding stretch occupies residues 1–239 (MPVTEKDLAE…VMTYLSQFPK (239 aa)). Calponin-homology (CH) domains follow at residues 16-122 (KIQQ…LHYS) and 139-242 (QTPK…KAKL). A Phosphothreonine modification is found at T216. The disordered stretch occupies residues 244–267 (PGAPLKPKLNPKKARAYGRGIEPT). 15 Filamin repeats span residues 249-347 (KPKL…EVSV), 349-446 (KAQG…VVQV), 447-543 (GEAC…EVQV), 544-636 (GPEA…MAFI), 640-736 (TGGY…RVNI), 737-839 (GQGS…RVKV), 840-938 (DPSH…TVGV), 939-1034 (AAPL…TVEA), 1035-1127 (SLPP…KADI), 1128-1222 (EMPF…RVKV), 1223-1322 (EPAV…KVAV), 1323-1415 (TEGC…RVPV), 1416-1511 (KDVV…KVKV), 1512-1608 (LPTY…RIRA), and 1609-1704 (TQTG…TVMA). Residue T519 is modified to Phosphothreonine. At K681 the chain carries N6-acetyllysine. S730 is modified (phosphoserine). 4 positions are modified to phosphoserine: S886, S932, S983, and S1028. Residues 1128–1511 (EMPFDPSKVV…IPRSPFKVKV (384 aa)) form an interaction with FBLP1 region. T1307 bears the Phosphothreonine mark. Residue S1316 is modified to Phosphoserine. Residues S1433, N1474, S1505, and S1602 each carry the phosphoserine modification. Positions 1705 to 1728 (TDGEVTAVEEAPVNACPPGFRPWV) are hinge 1. Filamin repeat units lie at residues 1729–1813 (TEEA…SPLQ), 1816–1908 (VNYP…TAKI), 1919–1994 (KLGS…SIMV), 1997–2089 (SEIG…TVKI), 2091–2185 (GEGR…QFTV), 2188–2280 (LGEG…LVPV), 2282–2375 (APSD…KVRV), and 2379–2471 (GQAG…KAKV). The residue at position 1780 (K1780) is an N6-acetyllysine. The interaction with the cytoplasmic tail of GP1BA stretch occupies residues 1862-2148 (SKAEISCIDN…RVTEAEIVPM (287 aa)). The interval 2060 to 2225 (SYFPTVPGVY…IWTREAGAGG (166 aa)) is interaction with FLNA 1. A phosphoserine mark is found at S2083, S2107, and S2113. The tract at residues 2130-2602 (SAHVTSPSGR…PGSPFHVTVP (473 aa)) is interaction with INPPL1. A phosphoserine mark is found at S2369 and S2465. A Glycyl lysine isopeptide (Lys-Gly) (interchain with G-Cter in ISG15) cross-link involves residue K2468. The hinge 2 stretch occupies residues 2472 to 2506 (TGQRLVSPGSANETSSILVESVTRSSTETCYSAIP). The tract at residues 2472–2602 (TGQRLVSPGS…PGSPFHVTVP (131 aa)) is self-association site, tail. S2478, S2481, and S2492 each carry phosphoserine. One copy of the Filamin 24 repeat lies at 2507–2601 (KASSDASKVT…IPGSPFHVTV (95 aa)). Positions 2507–2602 (KASSDASKVT…PGSPFHVTVP (96 aa)) are interaction with FLNA 2. N6-succinyllysine occurs at positions 2518 and 2524. Position 2576 is an N6-acetyllysine (K2576).

It belongs to the filamin family. In terms of assembly, homodimer. Interacts with MICALL2. Interacts with RFLNA and RFLNB. Isoform 1 interacts with FBLP1, FLNA, FLNC, GP1BA, INPPL1, ITGB1A, PSEN1 and PSEN2. Isoform 3 interacts with ITGB1A, ITGB1D, ITGB3 and ITGB6. Interacts with MYOT and MYOZ1. Interacts with HBV capsid protein. Interacts with ASB2 isoform 1; the interaction targets FLNB for proteasomal degradation. Post-translationally, ISGylation prevents ability to interact with the upstream activators of the JNK cascade and inhibits IFNA-induced JNK signaling. In terms of processing, ubiquitination by a SCF-like complex containing ASB2 isoform 1 leads to proteasomal degradation which promotes muscle differentiation. Ubiquitous. Isoform 1 and isoform 2 are expressed in placenta, bone marrow, brain, umbilical vein endothelial cells (HUVEC), retina and skeletal muscle. Isoform 1 is predominantly expressed in prostate, uterus, liver, thyroid, stomach, lymph node, small intestine, spleen, skeletal muscle, kidney, placenta, pancreas, heart, lung, platelets, endothelial cells, megakaryocytic and erythroleukemic cell lines. Isoform 2 is predominantly expressed in spinal cord, platelet and Daudi cells. Also expressed in thyroid adenoma, neurofibrillary tangles (NFT), senile plaques in the hippocampus and cerebral cortex in Alzheimer disease (AD). Isoform 3 and isoform 6 are expressed predominantly in lung, heart, skeletal muscle, testis, spleen, thymus and leukocytes. Isoform 4 and isoform 5 are expressed in heart.

It localises to the cytoplasm. The protein localises to the cell cortex. The protein resides in the cytoskeleton. It is found in the stress fiber. Its subcellular location is the myofibril. It localises to the sarcomere. The protein localises to the z line. In terms of biological role, connects cell membrane constituents to the actin cytoskeleton. May promote orthogonal branching of actin filaments and links actin filaments to membrane glycoproteins. Anchors various transmembrane proteins to the actin cytoskeleton. Interaction with FLNA may allow neuroblast migration from the ventricular zone into the cortical plate. Various interactions and localizations of isoforms affect myotube morphology and myogenesis. Isoform 6 accelerates muscle differentiation in vitro. The sequence is that of Filamin-B (FLNB) from Homo sapiens (Human).